Consider the following 592-residue polypeptide: MAAAVAAALARLLAAFLLLAAQVACEYGMVHVVSQAGGPEGKDYCILYNPQWAHLPHDLSKASFLQLRNWTASLLCSAADLPARGFSNQIPLVARGNCTFYEKVRLAQGSGARGLLIVSRERLVPPGGNKTQYDEIGIPVALLSYKDMLDIFTRFGRTVRAALYAPKEPVLDYNMVIIFIMAVGTVAIGGYWAGSRDVKKRYMKHKRDDGPEKQEDEAVDVTPVMTCVFVVMCCSMLVLLYYFYDLLVYVVIGIFCLASATGLYSCLAPCVRRLPFGKCRIPNNSLPYFHKRPQARMLLLALFCVAVSVVWGVFRNEDQWAWVLQDALGIAFCLYMLKTIRLPTFKACTLLLLVLFLYDIFFVFITPFLTKSGSSIMVEVATGPSDSATREKLPMVLKVPRLNSSPLALCDRPFSLLGFGDILVPGLLVAYCHRFDIQVQSSRVYFVACTIAYGVGLLVTFVALALMQRGQPALLYLVPCTLVTSCAVALWRRELGVFWTGSGFAKVLPPSPWAPAPADGPQPPKDSATPLSPQPPSEEPATSPWPAEQSPKSRTSEEMGAGAPMREPGSPAESEGRDQAQPSPVTQPGASA.

The N-terminal stretch at 1–25 (MAAAVAAALARLLAAFLLLAAQVAC) is a signal peptide. At 26 to 174 (EYGMVHVVSQ…APKEPVLDYN (149 aa)) the chain is on the lumenal side. The PA domain occupies 71-149 (TASLLCSAAD…VALLSYKDML (79 aa)). 2 N-linked (GlcNAc...) asparagine glycosylation sites follow: asparagine 97 and asparagine 129. Residues 175-195 (MVIIFIMAVGTVAIGGYWAGS) traverse the membrane as a helical segment. At 196–221 (RDVKKRYMKHKRDDGPEKQEDEAVDV) the chain is on the cytoplasmic side. The helical transmembrane segment at 222–244 (TPVMTCVFVVMCCSMLVLLYYFY) threads the bilayer. The Lumenal segment spans residues 245–248 (DLLV). The chain crosses the membrane as a helical span at residues 249–271 (YVVIGIFCLASATGLYSCLAPCV). Topologically, residues 272–293 (RRLPFGKCRIPNNSLPYFHKRP) are cytoplasmic. A helical transmembrane segment spans residues 294 to 314 (QARMLLLALFCVAVSVVWGVF). The Lumenal segment spans residues 315–319 (RNEDQ). Residues 320–340 (WAWVLQDALGIAFCLYMLKTI) traverse the membrane as a helical segment. Topologically, residues 341–348 (RLPTFKAC) are cytoplasmic. The chain crosses the membrane as a helical span at residues 349-369 (TLLLLVLFLYDIFFVFITPFL). Aspartate 359 is a catalytic residue. Topologically, residues 370 to 412 (TKSGSSIMVEVATGPSDSATREKLPMVLKVPRLNSSPLALCDR) are lumenal. A helical transmembrane segment spans residues 413-433 (PFSLLGFGDILVPGLLVAYCH). Aspartate 421 is an active-site residue. Residues 434-445 (RFDIQVQSSRVY) are Cytoplasmic-facing. Residues 446 to 466 (FVACTIAYGVGLLVTFVALAL) traverse the membrane as a helical segment. Residues 467-470 (MQRG) lie on the Lumenal side of the membrane. The chain crosses the membrane as a helical span at residues 471–491 (QPALLYLVPCTLVTSCAVALW). The PAL motif lies at 472-474 (PAL). Topologically, residues 492-592 (RRELGVFWTG…SPVTQPGASA (101 aa)) are cytoplasmic. Over residues 512–524 (PWAPAPADGPQPP) the composition is skewed to pro residues. Residues 512 to 592 (PWAPAPADGP…SPVTQPGASA (81 aa)) are disordered. Residues 580 to 592 (AQPSPVTQPGASA) are compositionally biased toward polar residues.

It belongs to the peptidase A22B family. Monomer. Homodimer. Interacts with ITM2B. Interacts with TNF. Interacts with the simian foamy virus envelope glycoprotein gp130 and its processed leader peptide gp18LP; preferentially interacts with the leader peptide gp18LP. Post-translationally, glycosylated. As to expression, expressed predominantly in adrenal cortex and mammary gland.

The protein localises to the cell membrane. It localises to the golgi apparatus membrane. Its subcellular location is the lysosome membrane. It is found in the endosome membrane. The protein resides in the membrane. Intramembrane-cleaving aspartic protease (I-CLiP) that cleaves type II membrane signal peptides in the hydrophobic plane of the membrane. Functions in ITM2B and TNF processing. Catalyzes the intramembrane cleavage of the anchored fragment of shed TNF-alpha (TNF), which promotes the release of the intracellular domain (ICD) for signaling to the nucleus. May play a role in the regulation of innate and adaptive immunity. Catalyzes the intramembrane cleavage of the simian foamy virus processed leader peptide gp18 of the envelope glycoprotein gp130 dependently of prior ectodomain shedding by furin or furin-like proprotein convertase (PC)-mediated cleavage proteolysis. The protein is Signal peptide peptidase-like 2B of Homo sapiens (Human).